The sequence spans 211 residues: Arginine exporter protein ArgO (211 aa).

A run of 6 helical transmembrane segments spans residues 1–21 (MISY…PLGP), 37–57 (LMIA…GIFG), 68–88 (LLAL…FGAL), 111–131 (IIAT…DTFV), 147–167 (WFAL…ALLA), and 179–199 (AQRI…FQLA).

This sequence belongs to the LysE/ArgO transporter (TC 2.A.75) family.

The protein resides in the cell inner membrane. The catalysed reaction is L-arginine(in) = L-arginine(out). Involved in the export of arginine. Important to control the intracellular level of arginine and the correct balance between arginine and lysine. The protein is Arginine exporter protein ArgO of Salmonella choleraesuis (strain SC-B67).